Reading from the N-terminus, the 1343-residue chain is DNA-directed RNA polymerase subunit beta (1343 aa).

This sequence belongs to the RNA polymerase beta chain family. In terms of assembly, the RNAP catalytic core consists of 2 alpha, 1 beta, 1 beta' and 1 omega subunit. When a sigma factor is associated with the core the holoenzyme is formed, which can initiate transcription.

It catalyses the reaction RNA(n) + a ribonucleoside 5'-triphosphate = RNA(n+1) + diphosphate. Functionally, DNA-dependent RNA polymerase catalyzes the transcription of DNA into RNA using the four ribonucleoside triphosphates as substrates. The protein is DNA-directed RNA polymerase subunit beta of Shewanella denitrificans (strain OS217 / ATCC BAA-1090 / DSM 15013).